The following is a 365-amino-acid chain: Nudix hydrolase 24, chloroplastic (365 aa).

The transit peptide at 1 to 30 (MASAFCSLCPTPTSLFSSHALIPTLQWRSS) directs the protein to the chloroplast. One can recognise a Nudix hydrolase domain in the interval 196-337 (GYAIHVNGYV…KDSCSLVIID (142 aa)). A Nudix box motif is present at residues 235–256 (GGLPHGISVCENLVKECEEEAG). Positions 250 and 254 each coordinate Mg(2+).

It belongs to the Nudix hydrolase family. The cofactor is Mg(2+). Requires Mn(2+) as cofactor. Expressed in leaves.

The protein resides in the plastid. The protein localises to the chloroplast. In terms of biological role, probably mediates the hydrolysis of some nucleoside diphosphate derivatives. The polypeptide is Nudix hydrolase 24, chloroplastic (NUDT24) (Arabidopsis thaliana (Mouse-ear cress)).